Reading from the N-terminus, the 120-residue chain is NAD(P)H-quinone oxidoreductase subunit 3, chloroplastic (120 aa).

Transmembrane regions (helical) follow at residues 9 to 29 (IFWAFLIISSVIPILAFLISG), 64 to 84 (MFALVFVVFDVETVFLYPWAM), and 88 to 108 (VLGVSVFIEALIFVLIPIVGS).

Belongs to the complex I subunit 3 family. In terms of assembly, NDH is composed of at least 16 different subunits, 5 of which are encoded in the nucleus.

Its subcellular location is the plastid. The protein resides in the chloroplast thylakoid membrane. The enzyme catalyses a plastoquinone + NADH + (n+1) H(+)(in) = a plastoquinol + NAD(+) + n H(+)(out). The catalysed reaction is a plastoquinone + NADPH + (n+1) H(+)(in) = a plastoquinol + NADP(+) + n H(+)(out). NDH shuttles electrons from NAD(P)H:plastoquinone, via FMN and iron-sulfur (Fe-S) centers, to quinones in the photosynthetic chain and possibly in a chloroplast respiratory chain. The immediate electron acceptor for the enzyme in this species is believed to be plastoquinone. Couples the redox reaction to proton translocation, and thus conserves the redox energy in a proton gradient. This Calycanthus floridus var. glaucus (Eastern sweetshrub) protein is NAD(P)H-quinone oxidoreductase subunit 3, chloroplastic.